We begin with the raw amino-acid sequence, 270 residues long: Phosphatidylglycerol--prolipoprotein diacylglyceryl transferase (270 aa).

Helical transmembrane passes span 19-39 (FPVYWYGIIIGTGVLLGLWLA), 56-76 (LVLIAVPIAILFARMYYVIFE), 92-112 (QGGLAIHGGLIGAVITGVLFA), and 116-136 (GVSFWKLADIAAPSILLGQAI). An a 1,2-diacyl-sn-glycero-3-phospho-(1'-sn-glycerol)-binding site is contributed by arginine 138. The next 3 helical transmembrane spans lie at 178–198 (HPTFLYESLWNFAGVILLLAL), 206–226 (GELFFTYLIWYSVGRFFVEGL), and 236–256 (LRIAQVMSIGLVVISIIFIIV).

The protein belongs to the Lgt family.

Its subcellular location is the cell membrane. The enzyme catalyses L-cysteinyl-[prolipoprotein] + a 1,2-diacyl-sn-glycero-3-phospho-(1'-sn-glycerol) = an S-1,2-diacyl-sn-glyceryl-L-cysteinyl-[prolipoprotein] + sn-glycerol 1-phosphate + H(+). It functions in the pathway protein modification; lipoprotein biosynthesis (diacylglyceryl transfer). Its function is as follows. Catalyzes the transfer of the diacylglyceryl group from phosphatidylglycerol to the sulfhydryl group of the N-terminal cysteine of a prolipoprotein, the first step in the formation of mature lipoproteins. The sequence is that of Phosphatidylglycerol--prolipoprotein diacylglyceryl transferase from Bacillus cereus (strain B4264).